The primary structure comprises 129 residues: Ropporin-1 (129 aa).

In terms of domain architecture, RIIa spans 11–34 (PELPELLKTQPPDLIQWAAEYFGA).

Belongs to the ropporin family. As to quaternary structure, homodimer. Interacts with AKAP3. May interact with SPA17. Interacts with RHPN1. Interacts with FSCB; the interaction increases upon spermatozoa capacitation conditions. Interacts with CFAP61. Post-translationally, sumoylated, sumoylation decreases upon spermatozoa capacitation conditions.

The protein localises to the cell projection. Its subcellular location is the cilium. It is found in the flagellum. In terms of biological role, important for male fertility. With ROPN1L, involved in fibrous sheath integrity and sperm motility, plays a role in PKA-dependent signaling processes required for spermatozoa capacitation. The polypeptide is Ropporin-1 (Mesocricetus auratus (Golden hamster)).